Reading from the N-terminus, the 62-residue chain is Photosystem II reaction center protein Z (62 aa).

A run of 2 helical transmembrane segments spans residues 8–28 and 41–61; these read AVFALIVTSSILLISVPVVFA and FSGTSLWIGLVFLVGILNSLI.

This sequence belongs to the PsbZ family. As to quaternary structure, PSII is composed of 1 copy each of membrane proteins PsbA, PsbB, PsbC, PsbD, PsbE, PsbF, PsbH, PsbI, PsbJ, PsbK, PsbL, PsbM, PsbT, PsbY, PsbZ, Psb30/Ycf12, at least 3 peripheral proteins of the oxygen-evolving complex and a large number of cofactors. It forms dimeric complexes.

The protein localises to the plastid. It localises to the chloroplast thylakoid membrane. Its function is as follows. May control the interaction of photosystem II (PSII) cores with the light-harvesting antenna, regulates electron flow through the 2 photosystem reaction centers. PSII is a light-driven water plastoquinone oxidoreductase, using light energy to abstract electrons from H(2)O, generating a proton gradient subsequently used for ATP formation. This Pisum sativum (Garden pea) protein is Photosystem II reaction center protein Z.